The chain runs to 257 residues: Ribosome-associated protein quality control protein P2 (257 aa).

The interval 1–74 (MSDIYQHFRK…RAERKRAILF (74 aa)) is N-terminal domain. Residues 87–166 (LQAFNVRYAD…EKIDLSDLNI (80 aa)) form a central region region. Residues 181 to 251 (LRLDAVCASM…GKTKKDKWRV (71 aa)) form the S4 RNA-binding domain.

In the presence of chloramphenicol (a translation elongation inhibitor), but not erythromycin or lincomycin, associates with 50S ribosomal subunits with or without a tRNA in the P-site. The S4 domain binds in a similar position to RqcP.

It is found in the cytoplasm. Functionally, part of the ribosome quality control system (RQC), a ribosome-associated complex that mediates the extraction of incompletely synthesized nascent chains from stalled ribosomes and their subsequent degradation. RqcH recruits Ala-charged tRNA, and with RqcP directs the elongation of stalled nascent chains on 50S ribosomal subunits, leading to non-templated C-terminal alanine extensions (Ala tail). The Ala tail promotes nascent chain degradation. RqcP2 (YlmH) overexpression can compensate for RqcP's role in Ala tailing during RQC, restoring Ala tail addition to peptides in stalled ribosomes. Overexpression complements a double ssrA-rqcP double deletion, but not an ssrA-rqcH double deletion. In terms of biological role, the majority of tagged protein is associated with tRNA-less 50S subunits, suggesting it might also play a role in late stage 50S subunit biogenesis. The chain is Ribosome-associated protein quality control protein P2 from Bacillus subtilis (strain 168).